The chain runs to 151 residues: Transcriptional regulator MraZ (151 aa).

2 SpoVT-AbrB domains span residues 5 to 52 (ANAI…PLSE) and 81 to 124 (AVDL…DEDA).

The protein belongs to the MraZ family. Forms oligomers.

It is found in the cytoplasm. The protein localises to the nucleoid. This is Transcriptional regulator MraZ from Pseudomonas syringae pv. syringae (strain B728a).